A 470-amino-acid polypeptide reads, in one-letter code: Nuclear receptor subfamily 0 group B member 1 (470 aa).

3 repeat units span residues 1-67, 68-133, and 134-200. The tract at residues 1 to 253 is 4 X 67 AA tandem repeats; the sequence is MAGENHQWQG…RPVALKNPQV (253 aa). 3 consecutive short sequence motifs (LXXLL motif) follow at residues 13–17, 80–84, and 146–150; these read LYNML, LYSML, and LYSLL. The stretch at 201-253 is one 4; truncated repeat; it reads FCGEDHPQQGSTLYCMPTSTNQAQAAPEERPRAPWWDTSSGALRPVALKNPQV. An NR LBD domain is found at 205 to 469; it reads DHPQQGSTLY…DMMLEMLCTK (265 aa). The AF-2 motif motif lies at 461–466; that stretch reads MMLEML.

This sequence belongs to the nuclear hormone receptor family. NR0 subfamily. Homodimer. Interacts with NR5A1, NR5A2, NR0B2 and with COPS2. Interacts with ESRRB; represses ESRRB activity at the GATA6 promoter.

It localises to the nucleus. Its subcellular location is the cytoplasm. Functionally, nuclear receptor that lacks a DNA-binding domain and acts as a corepressor that inhibits the transcriptional activity of other nuclear receptors through heterodimeric interactions. Component of a cascade required for the development of the hypothalamic-pituitary-adrenal-gonadal axis. May also have a role in the development of the embryo and in the maintenance of embryonic stem cell pluripotency. The polypeptide is Nuclear receptor subfamily 0 group B member 1 (NR0B1) (Macaca mulatta (Rhesus macaque)).